The primary structure comprises 548 residues: Putative malate oxidoreductase [NAD] (548 aa).

Tyrosine 96 (proton donor) is an active-site residue. Lysine 169 acts as the Proton acceptor in catalysis. A divalent metal cation is bound by residues glutamate 240, aspartate 241, and aspartate 264. NAD(+) is bound by residues 297–300 (AGTA), asparagine 410, and asparagine 455.

This sequence belongs to the malic enzymes family. It depends on Mg(2+) as a cofactor. Mn(2+) is required as a cofactor.

The catalysed reaction is (S)-malate + NAD(+) = pyruvate + CO2 + NADH. It catalyses the reaction oxaloacetate + H(+) = pyruvate + CO2. The chain is Putative malate oxidoreductase [NAD] (mez) from Mycobacterium tuberculosis (strain CDC 1551 / Oshkosh).